The chain runs to 41 residues: Large ribosomal subunit protein bL36 (41 aa).

The protein belongs to the bacterial ribosomal protein bL36 family.

In Nitrobacter hamburgensis (strain DSM 10229 / NCIMB 13809 / X14), this protein is Large ribosomal subunit protein bL36.